The following is a 153-amino-acid chain: Large ribosomal subunit protein uL30 (153 aa).

Belongs to the universal ribosomal protein uL30 family. As to quaternary structure, part of the 50S ribosomal subunit.

In Methanocella arvoryzae (strain DSM 22066 / NBRC 105507 / MRE50), this protein is Large ribosomal subunit protein uL30.